The chain runs to 438 residues: Enolase (438 aa).

Substrate is bound by residues H159 and E168. The active-site Proton donor is E211. Mg(2+)-binding residues include D246, E297, and D322. Residues E297 and D322 each contribute to the substrate site. The active-site Proton acceptor is the K347. Residues 374-377 and K398 each bind substrate; that span reads SHRS.

Belongs to the enolase family. Homodimer. Requires Mg(2+) as cofactor.

The protein localises to the cytoplasm. It carries out the reaction (2R)-2-phosphoglycerate = phosphoenolpyruvate + H2O. Its pathway is carbohydrate degradation; glycolysis; pyruvate from D-glyceraldehyde 3-phosphate: step 4/5. In terms of biological role, involved in osmoadaptation. The chain is Enolase (enoA) from Emericella nidulans (strain FGSC A4 / ATCC 38163 / CBS 112.46 / NRRL 194 / M139) (Aspergillus nidulans).